Reading from the N-terminus, the 252-residue chain is Isoprenyl transferase (252 aa).

Asp-32 is a catalytic residue. Asp-32 contributes to the Mg(2+) binding site. Substrate is bound by residues 33-36 (GNGR), Trp-37, Arg-45, His-49, and 77-79 (STE). Asn-80 acts as the Proton acceptor in catalysis. Substrate is bound by residues Trp-81, Arg-83, Arg-200, and 206-208 (RLS). Glu-219 is a Mg(2+) binding site.

Belongs to the UPP synthase family. As to quaternary structure, homodimer. Requires Mg(2+) as cofactor.

In terms of biological role, catalyzes the condensation of isopentenyl diphosphate (IPP) with allylic pyrophosphates generating different type of terpenoids. This chain is Isoprenyl transferase, found in Listeria innocua serovar 6a (strain ATCC BAA-680 / CLIP 11262).